Here is a 162-residue protein sequence, read N- to C-terminus: Large ribosomal subunit protein uL10 (162 aa).

This sequence belongs to the universal ribosomal protein uL10 family. Part of the ribosomal stalk of the 50S ribosomal subunit. The N-terminus interacts with L11 and the large rRNA to form the base of the stalk. The C-terminus forms an elongated spine to which L12 dimers bind in a sequential fashion forming a multimeric L10(L12)X complex.

Forms part of the ribosomal stalk, playing a central role in the interaction of the ribosome with GTP-bound translation factors. The sequence is that of Large ribosomal subunit protein uL10 from Borrelia recurrentis (strain A1).